A 354-amino-acid chain; its full sequence is D-alanine--D-alanine ligase (354 aa).

Positions 132 to 342 (KMVFERAGLP…FPSLVDRLLQ (211 aa)) constitute an ATP-grasp domain. ATP is bound at residue 168-223 (EAQVGYPCFVKPANLGSSVGIAKVRNRSELEAALDNAASYDRRIIVEAGLTDIREV). Asp-295, Glu-309, and Asn-311 together coordinate Mg(2+).

It belongs to the D-alanine--D-alanine ligase family. Requires Mg(2+) as cofactor. The cofactor is Mn(2+).

The protein localises to the cytoplasm. The enzyme catalyses 2 D-alanine + ATP = D-alanyl-D-alanine + ADP + phosphate + H(+). It functions in the pathway cell wall biogenesis; peptidoglycan biosynthesis. Cell wall formation. This is D-alanine--D-alanine ligase from Synechocystis sp. (strain ATCC 27184 / PCC 6803 / Kazusa).